We begin with the raw amino-acid sequence, 158 residues long: MRFNEKELVFLSRQPTQRAAELGMRGPKKGDVVKKRFVKLIVNFLFYFRTDEDEPIGALLLEQCRVEREDLQVFSIVFLDEAERKYLFECDSQEQCAEWIDAIIKASYEFMRKNLVYYRTEIHRLTGKDPLEQYGISDETRFQVNSALPPLPPPPPPT.

A PH domain is found at 15-108 (PTQRAAELGM…WIDAIIKASY (94 aa)).

This chain is Pleckstrin homology domain-containing family J member 1 (plekhj1), found in Danio rerio (Zebrafish).